The following is a 32-amino-acid chain: Basic phospholipase A2 (32 aa).

Ca(2+) contacts are provided by Tyr-26, Gly-28, and Gly-30.

Belongs to the phospholipase A2 family. Group II subfamily. Ca(2+) serves as cofactor. As to expression, expressed by the venom gland.

It localises to the secreted. It carries out the reaction a 1,2-diacyl-sn-glycero-3-phosphocholine + H2O = a 1-acyl-sn-glycero-3-phosphocholine + a fatty acid + H(+). Snake venom phospholipase A2 (PLA2) that inhibits neuromuscular transmission by blocking acetylcholine release from the nerve termini. PLA2 catalyzes the calcium-dependent hydrolysis of the 2-acyl groups in 3-sn-phosphoglycerides. This chain is Basic phospholipase A2, found in Gloydius halys (Chinese water mocassin).